A 151-amino-acid chain; its full sequence is Large ribosomal subunit protein bL9 (151 aa).

The protein belongs to the bacterial ribosomal protein bL9 family.

Binds to the 23S rRNA. This chain is Large ribosomal subunit protein bL9, found in Francisella tularensis subsp. novicida (strain U112).